A 74-amino-acid polypeptide reads, in one-letter code: Large ribosomal subunit protein bL31 (74 aa).

Zn(2+) is bound by residues Cys16, Cys18, Cys38, and Cys41.

It belongs to the bacterial ribosomal protein bL31 family. Type A subfamily. In terms of assembly, part of the 50S ribosomal subunit. It depends on Zn(2+) as a cofactor.

Its function is as follows. Binds the 23S rRNA. This chain is Large ribosomal subunit protein bL31, found in Streptomyces griseus subsp. griseus (strain JCM 4626 / CBS 651.72 / NBRC 13350 / KCC S-0626 / ISP 5235).